The primary structure comprises 300 residues: tRNA dimethylallyltransferase (300 aa).

Gly11–Ser18 contributes to the ATP binding site. Position 13–18 (Thr13–Ser18) interacts with substrate. Residues Asp35 to Gln38 are interaction with substrate tRNA.

This sequence belongs to the IPP transferase family. In terms of assembly, monomer. Mg(2+) is required as a cofactor.

The enzyme catalyses adenosine(37) in tRNA + dimethylallyl diphosphate = N(6)-dimethylallyladenosine(37) in tRNA + diphosphate. Functionally, catalyzes the transfer of a dimethylallyl group onto the adenine at position 37 in tRNAs that read codons beginning with uridine, leading to the formation of N6-(dimethylallyl)adenosine (i(6)A). This Borrelia turicatae (strain 91E135) protein is tRNA dimethylallyltransferase.